The sequence spans 193 residues: ATP-dependent Clp protease proteolytic subunit (193 aa).

S98 (nucleophile) is an active-site residue. Residue H123 is part of the active site.

It belongs to the peptidase S14 family. As to quaternary structure, fourteen ClpP subunits assemble into 2 heptameric rings which stack back to back to give a disk-like structure with a central cavity, resembling the structure of eukaryotic proteasomes.

The protein resides in the cytoplasm. The catalysed reaction is Hydrolysis of proteins to small peptides in the presence of ATP and magnesium. alpha-casein is the usual test substrate. In the absence of ATP, only oligopeptides shorter than five residues are hydrolyzed (such as succinyl-Leu-Tyr-|-NHMec, and Leu-Tyr-Leu-|-Tyr-Trp, in which cleavage of the -Tyr-|-Leu- and -Tyr-|-Trp bonds also occurs).. Cleaves peptides in various proteins in a process that requires ATP hydrolysis. Has a chymotrypsin-like activity. Plays a major role in the degradation of misfolded proteins. The sequence is that of ATP-dependent Clp protease proteolytic subunit from Agathobacter rectalis (strain ATCC 33656 / DSM 3377 / JCM 17463 / KCTC 5835 / VPI 0990) (Eubacterium rectale).